The chain runs to 365 residues: Regulatory protein RapG (365 aa).

TPR repeat units lie at residues 135–168 (GKLYYKLGQNIVSLNHTRQAVKTFREETDYKKKL), 169–202 (ASALITMSGNFTEMSQFEEAEAYLDEAIRITSEL), 209–242 (AQLLHNFGLLHAQSGKSEEAVSKLEEALQNDEYA), 244–284 (SAYY…EPNR), and 326–359 (RELSILAGERYRELELYKEAAHFFYEALQIEELI).

This sequence belongs to the Rap family.

The protein resides in the cytoplasm. Inhibited by PhrG. Functionally, involved in the regulation of expression of DegU-controlled genes. Inhibits the binding of DegU to the promoter regions of aprE, coding for an extracellular alkaline protease, and comK, a master regulator for development of genetic competence. RapG does not stimulate dephosphorylation of DegU-P. The protein is Regulatory protein RapG (rapG) of Bacillus subtilis (strain 168).